The chain runs to 347 residues: Eukaryotic translation initiation factor 3 subunit I (347 aa).

5 WD repeats span residues 8 to 47 (GHER…RLGT), 50 to 89 (DHSG…AVHS), 150 to 190 (EQAT…VQAK), 192 to 233 (IHEK…KTYK), and 289 to 328 (GHFG…FDFK).

Belongs to the eIF-3 subunit I family. As to quaternary structure, component of the eukaryotic translation initiation factor 3 (eIF-3) complex.

The protein localises to the cytoplasm. Its function is as follows. Component of the eukaryotic translation initiation factor 3 (eIF-3) complex, which is involved in protein synthesis of a specialized repertoire of mRNAs and, together with other initiation factors, stimulates binding of mRNA and methionyl-tRNAi to the 40S ribosome. The eIF-3 complex specifically targets and initiates translation of a subset of mRNAs involved in cell proliferation. This chain is Eukaryotic translation initiation factor 3 subunit I, found in Kluyveromyces lactis (strain ATCC 8585 / CBS 2359 / DSM 70799 / NBRC 1267 / NRRL Y-1140 / WM37) (Yeast).